We begin with the raw amino-acid sequence, 549 residues long: Glucose-6-phosphate isomerase (549 aa).

Residue E353 is the Proton donor of the active site. Active-site residues include H384 and K510.

Belongs to the GPI family.

The protein resides in the cytoplasm. It carries out the reaction alpha-D-glucose 6-phosphate = beta-D-fructose 6-phosphate. Its pathway is carbohydrate biosynthesis; gluconeogenesis. It functions in the pathway carbohydrate degradation; glycolysis; D-glyceraldehyde 3-phosphate and glycerone phosphate from D-glucose: step 2/4. Its function is as follows. Catalyzes the reversible isomerization of glucose-6-phosphate to fructose-6-phosphate. This chain is Glucose-6-phosphate isomerase, found in Mycolicibacterium smegmatis (Mycobacterium smegmatis).